The chain runs to 580 residues: NADH-quinone oxidoreductase subunit C/D (580 aa).

Positions 1 to 171 (MSFDQVIADA…PPFVLTDRLF (171 aa)) are NADH dehydrogenase I subunit C. The interval 195-580 (ELMVLNFGPH…IDFVMSDVDR (386 aa)) is NADH dehydrogenase I subunit D.

The protein in the N-terminal section; belongs to the complex I 30 kDa subunit family. This sequence in the C-terminal section; belongs to the complex I 49 kDa subunit family. In terms of assembly, NDH-1 is composed of 13 different subunits. Subunits NuoB, CD, E, F, and G constitute the peripheral sector of the complex.

Its subcellular location is the cell inner membrane. It catalyses the reaction a quinone + NADH + 5 H(+)(in) = a quinol + NAD(+) + 4 H(+)(out). NDH-1 shuttles electrons from NADH, via FMN and iron-sulfur (Fe-S) centers, to quinones in the respiratory chain. The immediate electron acceptor for the enzyme in this species is believed to be ubiquinone. Couples the redox reaction to proton translocation (for every two electrons transferred, four hydrogen ions are translocated across the cytoplasmic membrane), and thus conserves the redox energy in a proton gradient. This Cereibacter sphaeroides (strain ATCC 17025 / ATH 2.4.3) (Rhodobacter sphaeroides) protein is NADH-quinone oxidoreductase subunit C/D.